A 231-amino-acid chain; its full sequence is Large ribosomal subunit protein uL1 (231 aa).

The protein belongs to the universal ribosomal protein uL1 family. In terms of assembly, part of the 50S ribosomal subunit.

Functionally, binds directly to 23S rRNA. The L1 stalk is quite mobile in the ribosome, and is involved in E site tRNA release. In terms of biological role, protein L1 is also a translational repressor protein, it controls the translation of the L11 operon by binding to its mRNA. In Pseudomonas syringae pv. tomato (strain ATCC BAA-871 / DC3000), this protein is Large ribosomal subunit protein uL1.